Reading from the N-terminus, the 200-residue chain is Protein Rv0461 (200 aa).

The disordered stretch occupies residues 47 to 67 (DRAGKSWPGSTPKPQEDPVGV). 3 helical membrane-spanning segments follow: residues 102–122 (FVLV…SLFY), 134–154 (VFVV…LALV), and 159–179 (LITA…AAAA).

The protein localises to the cell membrane. The polypeptide is Protein Rv0461 (Mycobacterium tuberculosis (strain ATCC 25618 / H37Rv)).